Here is a 780-residue protein sequence, read N- to C-terminus: Cyclin-F (780 aa).

The Nuclear localization signal 1 motif lies at 20-28 (KRRIKRRPR). In terms of domain architecture, F-box spans 29–76 (NLTILSLPEDVLFHILKWLSVGDILAVRAVHSHLKYLVDNHASVWASA). One can recognise a Cyclin N-terminal domain in the interval 288 to 405 (QASQAVNKQQ…EIISALEGKI (118 aa)). 3 consecutive short sequence motifs (d box) follow at residues 310-313 (RYIL), 343-346 (RRRL), and 349-352 (RYKL). Disordered regions lie at residues 544-594 (QESP…AELS), 651-733 (QESS…STKP), and 745-780 (CRPP…FLKL). The short motif at 568–574 (RRSKRKR) is the Nuclear localization signal 2 element. A PEST region spans residues 582–761 (RGSFVTTPTA…ESGAHQQPVK (180 aa)). Residues 585–594 (FVTTPTAELS) are compositionally biased toward polar residues. Low complexity-rich tracts occupy residues 695–708 (SGYS…PISS) and 719–731 (STSV…HSST). The D box 4 signature appears at 762-765 (RQNL).

The protein belongs to the cyclin family. Cyclin AB subfamily. In terms of assembly, component of the SCF(CCNF) complex consisting of CUL1, RBX1, SKP1 and CCNF. Interacts with SKP1. Interacts with CUL1. Interacts with CCNB1; interaction is required for nuclear localization of CCNB1. Interacts with CCP110; this interaction leads to CCP110 ubiquitination and degradation via the proteasome pathway. Interacts (via the Cyclin N-terminal domain) with MYBL2/BMYB. Interacts with FZR1/CDH1 (via N-terminus). Interacts with RRM2 (via Cy motif and when phosphorylated at 'Thr-33'); the interaction occurs exclusively in G2 and early M. Interacts with CDC6 (via Cy motif); the interaction takes place during G2 and M phase. In terms of processing, degraded when the spindle assembly checkpoint is activated during the G2-M transition. Degradation is not dependent on the proteasome or ubiquitin and depends on the C-terminal PEST sequence. Post-translationally, phosphorylated just before cells enter into mitosis. Ubiquitinated by the anaphase-promoting complex (APC/C); leading to its degradation by the proteasome.

Its subcellular location is the nucleus. The protein localises to the cytoplasm. It is found in the perinuclear region. The protein resides in the cytoskeleton. It localises to the microtubule organizing center. Its subcellular location is the centrosome. The protein localises to the centriole. Substrate recognition component of a SCF (SKP1-CUL1-F-box protein) E3 ubiquitin-protein ligase complex which mediates the ubiquitination and subsequent proteasomal degradation of target proteins. The SCF(CCNF) E3 ubiquitin-protein ligase complex is an integral component of the ubiquitin proteasome system (UPS) and links proteasome degradation to the cell cycle. Mediates the substrate recognition and the proteasomal degradation of various target proteins involved in the regulation of cell cycle progression and in the maintenance of genome stability. Mediates the ubiquitination and subsequent proteasomal degradation of CP110 during G2 phase, thereby acting as an inhibitor of centrosome reduplication. In G2, mediates the ubiquitination and proteasomal degradation of CDC6, thereby suppressing DNA re-replication and preventing genome instability. Involved in the ubiquitination and degradation of the substrate adapter CDH1 of the anaphase-promoting complex (APC/C), thereby acting as an antagonist of APC/C in regulating G1 progression and S phase entry. May play a role in the G2 cell cycle checkpoint control after DNA damage, possibly by promoting the ubiquitination of MYBL2/BMYB. The sequence is that of Cyclin-F (Ccnf) from Rattus norvegicus (Rat).